A 314-amino-acid polypeptide reads, in one-letter code: Hydrolase 4 (314 aa).

The Involved in the stabilization of the negatively charged intermediate by the formation of the oxyanion hole signature appears at 73–75; that stretch reads HGA. Catalysis depends on residues Ser165 and Asp260.

It belongs to the 'GDXG' lipolytic enzyme family.

It participates in alkaloid biosynthesis. Functionally, component of the seco-iridoid and derivatives monoterpenoid indole alkaloids (MIAs, e.g. vincadifformine) biosynthesis pathway. Catalyzes the conversion of O-acetylstemmadenine (OAS) to vincadifformine. May also trigger the formation of additional unknown MIAs. This is Hydrolase 4 from Catharanthus roseus (Madagascar periwinkle).